The sequence spans 122 residues: UPF0102 protein CLH_1204 (122 aa).

It belongs to the UPF0102 family.

The sequence is that of UPF0102 protein CLH_1204 from Clostridium botulinum (strain Alaska E43 / Type E3).